A 298-amino-acid chain; its full sequence is Putative insertion sequence ATP-binding protein y4iQ/y4nD/y4sD (298 aa).

114–121 (GPPGGGKS) is an ATP binding site. Residues 276–298 (RQSEHDETLASDNQHDTFMPTAT) form a disordered region.

This sequence belongs to the IS21/IS1162 putative ATP-binding protein family.

This chain is Putative insertion sequence ATP-binding protein y4iQ/y4nD/y4sD, found in Sinorhizobium fredii (strain NBRC 101917 / NGR234).